Consider the following 383-residue polypeptide: La protein homolog (383 aa).

Residues 1-43 (MTEVEAKATATEETTKEEEEAPETTAEQTEESAQETSENVSKL) are disordered. A compositionally biased stretch (acidic residues) spans 15-33 (TKEEEEAPETTAEQTEESA). Residues 37–129 (SENVSKLEAS…RRHPERPLPE (93 aa)) enclose the HTH La-type RNA-binding domain. The 88-residue stretch at 141–228 (RTVYVKGFAP…RKMQDDYFEE (88 aa)) folds into the RRM domain. Residues 249-368 (HLPKGASVHL…RTPEGRQASR (120 aa)) enclose the xRRM domain. The disordered stretch occupies residues 343–383 (KDQQARRQASNARNKGRTPEGRQASRPPQEWRRKAKGGRGE).

Its subcellular location is the nucleus. It is found in the cytoplasm. Its function is as follows. May be involved in transcription termination by RNA polymerase III. Binds RNA and DNA. Binds to the 3' end of the minus strand of Sindbis virus RNA. This may be significant for Sindbis virus RNA replication. The polypeptide is La protein homolog (Aedes albopictus (Asian tiger mosquito)).